A 159-amino-acid chain; its full sequence is MTLLIDLIDETGQVSKEQLEEVEKLLQFAADALEVKDQAEVSVTIVSNEEIHQINKEYRGKDAPTDVISFALEEEGEGEIEIIGADDIPPVLGDIIISVDRTKEQAEEYGHSFMRELGFLTIHGFLHLLGFDHMTEEDEKEMFAKQTKILDDYGLSRSS.

Positions 123, 127, and 133 each coordinate Zn(2+).

The protein belongs to the endoribonuclease YbeY family. Zn(2+) serves as cofactor.

The protein resides in the cytoplasm. Single strand-specific metallo-endoribonuclease involved in late-stage 70S ribosome quality control and in maturation of the 3' terminus of the 16S rRNA. In Bacillus pumilus (strain SAFR-032), this protein is Endoribonuclease YbeY.